A 453-amino-acid polypeptide reads, in one-letter code: GTPase Der (453 aa).

2 consecutive EngA-type G domains span residues 4–169 (PIVA…PPVT) and 177–352 (IKIA…EEHK). Residues 10–17 (GRPNVGKS), 57–61 (DTGGL), 120–123 (NKCE), 183–190 (GRPNVGKS), 230–234 (DTAGI), and 295–298 (NKWD) contribute to the GTP site. Residues 353 to 438 (RRVSTSVINE…PIRLLWRSKK (86 aa)) enclose the KH-like domain.

The protein belongs to the TRAFAC class TrmE-Era-EngA-EngB-Septin-like GTPase superfamily. EngA (Der) GTPase family. As to quaternary structure, associates with the 50S ribosomal subunit.

Functionally, GTPase that plays an essential role in the late steps of ribosome biogenesis. This Nostoc sp. (strain PCC 7120 / SAG 25.82 / UTEX 2576) protein is GTPase Der.